The chain runs to 202 residues: Probable pathogenesis-related protein CaO19.2336 (202 aa).

The first 20 residues, 1–20, serve as a signal peptide directing secretion; the sequence is MKTLLFIYLQLLLLLSIIIG. 2 N-linked (GlcNAc...) asparagine glycosylation sites follow: N58 and N152. Residues 66–179 enclose the SCP domain; the sequence is LKEHNNKRKL…LNALYIVCSY (114 aa).

This sequence belongs to the CRISP family.

It is found in the secreted. Its function is as follows. Secreted protein that acts as a virulence factor during infections. This Candida albicans (strain SC5314 / ATCC MYA-2876) (Yeast) protein is Probable pathogenesis-related protein CaO19.2336.